Consider the following 838-residue polypeptide: Protein translocase subunit SecA (838 aa).

ATP contacts are provided by residues glutamine 86, 104 to 108, and aspartate 493; that span reads GEGKT. Disordered regions lie at residues 517-536 and 789-838; these read RRID…PGSS and KVAE…CCGQ. Positions 801–819 are enriched in basic and acidic residues; sequence TDGDSKAKRQPVRKKETVG. Cysteine 824, cysteine 826, cysteine 835, and cysteine 836 together coordinate Zn(2+).

It belongs to the SecA family. In terms of assembly, monomer and homodimer. Part of the essential Sec protein translocation apparatus which comprises SecA, SecYEG and auxiliary proteins SecDF. Other proteins may also be involved. Requires Zn(2+) as cofactor.

It localises to the cell membrane. It is found in the cytoplasm. The enzyme catalyses ATP + H2O + cellular proteinSide 1 = ADP + phosphate + cellular proteinSide 2.. Functionally, part of the Sec protein translocase complex. Interacts with the SecYEG preprotein conducting channel. Has a central role in coupling the hydrolysis of ATP to the transfer of proteins into and across the cell membrane, serving as an ATP-driven molecular motor driving the stepwise translocation of polypeptide chains across the membrane. This Halalkalibacterium halodurans (strain ATCC BAA-125 / DSM 18197 / FERM 7344 / JCM 9153 / C-125) (Bacillus halodurans) protein is Protein translocase subunit SecA.